The following is a 135-amino-acid chain: uncharacterized protein (135 aa).

The next 4 helical transmembrane spans lie at 4–24 (IIIC…WIFG), 26–46 (WDMP…TGVI), 68–88 (LILV…NGAW), and 93–113 (LIAY…CAAL).

This sequence belongs to the bacteriophage holin family. Cp-1 holin subfamily.

Its subcellular location is the cell membrane. This is an uncharacterized protein from Clostridium perfringens (strain 13 / Type A).